We begin with the raw amino-acid sequence, 484 residues long: Cobyric acid synthase (484 aa).

The region spanning 246-437 (ALRVVVPALP…VHGLFDTPAA (192 aa)) is the GATase cobBQ-type domain. Catalysis depends on cysteine 327, which acts as the Nucleophile. The active site involves histidine 429.

It belongs to the CobB/CobQ family. CobQ subfamily.

Its pathway is cofactor biosynthesis; adenosylcobalamin biosynthesis. Its function is as follows. Catalyzes amidations at positions B, D, E, and G on adenosylcobyrinic A,C-diamide. NH(2) groups are provided by glutamine, and one molecule of ATP is hydrogenolyzed for each amidation. This is Cobyric acid synthase from Paraburkholderia phymatum (strain DSM 17167 / CIP 108236 / LMG 21445 / STM815) (Burkholderia phymatum).